The sequence spans 750 residues: Polyribonucleotide nucleotidyltransferase (750 aa).

Mg(2+) contacts are provided by Asp489 and Asp495. The 65-residue stretch at 556-620 (PKMITRRIPN…EGIDKVIAKI (65 aa)) folds into the KH domain. Residues 630-701 (GSVYEVKVIK…KTRKDKVSRK (72 aa)) form the S1 motif domain. The segment at 697-750 (KVSRKALMEKPEGYKERAPRDRDDKRGSRDNNRGRDNRGRDNRRDDRKPRENKD) is disordered. A compositionally biased stretch (basic and acidic residues) spans 702–750 (ALMEKPEGYKERAPRDRDDKRGSRDNNRGRDNRGRDNRRDDRKPRENKD).

It belongs to the polyribonucleotide nucleotidyltransferase family. Mg(2+) is required as a cofactor.

It localises to the cytoplasm. It carries out the reaction RNA(n+1) + phosphate = RNA(n) + a ribonucleoside 5'-diphosphate. In terms of biological role, involved in mRNA degradation. Catalyzes the phosphorolysis of single-stranded polyribonucleotides processively in the 3'- to 5'-direction. This Christiangramia forsetii (strain DSM 17595 / CGMCC 1.15422 / KT0803) (Gramella forsetii) protein is Polyribonucleotide nucleotidyltransferase.